A 539-amino-acid chain; its full sequence is Transcription factor LG2 (539 aa).

A compositionally biased stretch (polar residues) spans 115–125; it reads MRQQQQLHSGN. 2 disordered regions span residues 115–140 and 181–246; these read MRQQQQLHSGNSQSVGSTTDSSSAQN and KPGL…KSRL. 2 stretches are compositionally biased toward low complexity: residues 126–137 and 192–205; these read SQSVGSTTDSSS and QQQHQLQHHQQQQL. Over residues 219–242 the composition is skewed to basic and acidic residues; it reads TRKDGKSVDAKTERRLAQNREAAR. One can recognise a bZIP domain in the interval 227–271; the sequence is DAKTERRLAQNREAARKSRLRKKAYVQNLETSRVRLQQIEQELQR. A basic motif region spans residues 229-249; that stretch reads KTERRLAQNREAARKSRLRKK. The interval 255-269 is leucine-zipper; it reads LETSRVRLQQIEQEL. In terms of domain architecture, DOG1 spans 292-506; it reads AAMFDMEYAR…RALSNLWSSR (215 aa). Residues 513–539 form a disordered region; it reads GTESVSPTGTELQPMHNQPQQNQYSGF.

It belongs to the bZIP family. In terms of assembly, interacts with NPR1/NH1 and NPR3/NH3.

It localises to the nucleus. Transcriptional regulator involved in defense response. Acts as a transcriptional activator in vitro. This Oryza sativa subsp. japonica (Rice) protein is Transcription factor LG2.